Consider the following 214-residue polypeptide: Small ribosomal subunit protein uS2 (214 aa).

The protein belongs to the universal ribosomal protein uS2 family.

The polypeptide is Small ribosomal subunit protein uS2 (Thermofilum pendens (strain DSM 2475 / Hrk 5)).